A 472-amino-acid chain; its full sequence is Nucleoporin NUP49/NSP49 (472 aa).

The stretch at 2–3 is one FG 1 repeat; the sequence is FG. One copy of the GLFG 1 repeat lies at 14 to 17; it reads GLFG. Residues 28 to 104 form a disordered region; the sequence is NTGFSFGGTQ…TANTGGGLFG (77 aa). The FG 2 repeat unit spans residues 33-34; it reads FG. The GLFG 2 repeat unit spans residues 48–51; it reads GLFG. Positions 64–80 are enriched in low complexity; the sequence is SFGQQQQQSQTNAFGGS. FG repeat units follow at residues 65 to 66 and 77 to 78; these read FG. GLFG repeat units follow at residues 86 to 89 and 101 to 104; these read GLFG. An SLFG 1 repeat occupies 113–116; that stretch reads SLFG. GLFG repeat units lie at residues 125 to 128 and 148 to 151; these read GLFG. Residues 159-162 form an SLFG 2 repeat; sequence SLFG. The GLFG 7; approximate repeat unit spans residues 175–178; sequence GMFG. One copy of the SLFG 3 repeat lies at 185–188; it reads SLFG. The stretch at 199 to 202 is one GLFG 8 repeat; it reads GLFG. The SLFG 4 repeat unit spans residues 210–213; it reads SLFG. The disordered stretch occupies residues 211–242; it reads LFGSSNNNNNNNNSNNIMSASGGLFGNQQQQL. Over residues 214–226 the composition is skewed to low complexity; that stretch reads SSNNNNNNNNSNN. Residues 233-236 form a GLFG 9 repeat; sequence GLFG.

This sequence belongs to the nucleoporin GLFG family. In terms of assembly, component of the nuclear pore complex (NPC). NPC constitutes the exclusive means of nucleocytoplasmic transport. NPCs allow the passive diffusion of ions and small molecules and the active, nuclear transport receptor-mediated bidirectional transport of macromolecules such as proteins, RNAs, ribonucleoparticles (RNPs), and ribosomal subunits across the nuclear envelope. Due to its 8-fold rotational symmetry, all subunits are present with 8 copies or multiples thereof. NUP49 is part of the NUP57 subcomplex (NIC96, NSP1, NUP49, NUP57) interacting with NUP57. Interacts through its FG repeats with karyopherins.

The protein localises to the nucleus. It is found in the nuclear pore complex. Its subcellular location is the nucleus membrane. Its function is as follows. Functions as a component of the nuclear pore complex (NPC). NPC components, collectively referred to as nucleoporins (NUPs), can play the role of both NPC structural components and of docking or interaction partners for transiently associated nuclear transport factors. Active directional transport is assured by both, a Phe-Gly (FG) repeat affinity gradient for these transport factors across the NPC and a transport cofactor concentration gradient across the nuclear envelope (GSP1 and GSP2 GTPases associated predominantly with GTP in the nucleus, with GDP in the cytoplasm). NUP49 plays an important role in several nuclear transport pathways including poly(A)+ RNA, tRNA, and pre-ribosome transport. The polypeptide is Nucleoporin NUP49/NSP49 (NUP49) (Saccharomyces cerevisiae (strain ATCC 204508 / S288c) (Baker's yeast)).